Consider the following 75-residue polypeptide: CDC42 small effector protein 2-C (75 aa).

2 S-palmitoyl cysteine lipidation sites follow: cysteine 10 and cysteine 11. The CRIB domain occupies 29–42 (IGEPMNFVHTAHVG).

Belongs to the CDC42SE/SPEC family.

It localises to the cytoplasm. The protein resides in the cytoskeleton. It is found in the cell membrane. Its function is as follows. Probably involved in the organization of the actin cytoskeleton by acting downstream of CDC42, inducing actin filament assembly. The chain is CDC42 small effector protein 2-C (cdc42se2-c) from Xenopus laevis (African clawed frog).